The following is a 119-amino-acid chain: Large ribosomal subunit protein bL20 (119 aa).

It belongs to the bacterial ribosomal protein bL20 family.

Its function is as follows. Binds directly to 23S ribosomal RNA and is necessary for the in vitro assembly process of the 50S ribosomal subunit. It is not involved in the protein synthesizing functions of that subunit. The polypeptide is Large ribosomal subunit protein bL20 (Enterococcus faecalis (strain ATCC 700802 / V583)).